A 109-amino-acid polypeptide reads, in one-letter code: Nucleoid-associated protein MS1507 (109 aa).

The interval 1-21 is disordered; the sequence is MFGKGGLGNLMKQAQQMQERM.

This sequence belongs to the YbaB/EbfC family. As to quaternary structure, homodimer.

It is found in the cytoplasm. The protein localises to the nucleoid. Its function is as follows. Binds to DNA and alters its conformation. May be involved in regulation of gene expression, nucleoid organization and DNA protection. In Mannheimia succiniciproducens (strain KCTC 0769BP / MBEL55E), this protein is Nucleoid-associated protein MS1507.